The primary structure comprises 593 residues: Probable serine/threonine-protein kinase fhkA (593 aa).

A disordered region spans residues 1–24 (MSQTNYIPSTPNKSTPPSELSSTP). An FHA domain is found at 54-111 (ITIGRSKTCNIVVPELIVSGKHCIITRADAIENGNTNYGLLMIQDQSTNGTFINGKLI). One can recognise a Protein kinase domain in the interval 180-472 (YDFIKELGSG…VEQALNHPWI (293 aa)). ATP is bound by residues 186 to 194 (LGSGNFSVV) and lysine 209. Aspartate 307 acts as the Proton acceptor in catalysis.

The protein belongs to the protein kinase superfamily. CAMK Ser/Thr protein kinase family. CHK2 subfamily.

It carries out the reaction L-seryl-[protein] + ATP = O-phospho-L-seryl-[protein] + ADP + H(+). It catalyses the reaction L-threonyl-[protein] + ATP = O-phospho-L-threonyl-[protein] + ADP + H(+). This is Probable serine/threonine-protein kinase fhkA (fhkA) from Dictyostelium discoideum (Social amoeba).